The following is a 272-amino-acid chain: Thiazole synthase (272 aa).

Catalysis depends on lysine 111, which acts as the Schiff-base intermediate with DXP. 1-deoxy-D-xylulose 5-phosphate is bound by residues glycine 172, alanine 198–glycine 199, and asparagine 220–serine 221. Residues serine 249–glutamine 272 are disordered. A compositionally biased stretch (polar residues) spans alanine 258–glutamine 272.

The protein belongs to the ThiG family. As to quaternary structure, homotetramer. Forms heterodimers with either ThiH or ThiS.

It is found in the cytoplasm. It carries out the reaction [ThiS sulfur-carrier protein]-C-terminal-Gly-aminoethanethioate + 2-iminoacetate + 1-deoxy-D-xylulose 5-phosphate = [ThiS sulfur-carrier protein]-C-terminal Gly-Gly + 2-[(2R,5Z)-2-carboxy-4-methylthiazol-5(2H)-ylidene]ethyl phosphate + 2 H2O + H(+). The protein operates within cofactor biosynthesis; thiamine diphosphate biosynthesis. In terms of biological role, catalyzes the rearrangement of 1-deoxy-D-xylulose 5-phosphate (DXP) to produce the thiazole phosphate moiety of thiamine. Sulfur is provided by the thiocarboxylate moiety of the carrier protein ThiS. In vitro, sulfur can be provided by H(2)S. This is Thiazole synthase from Synechococcus sp. (strain CC9605).